Here is a 466-residue protein sequence, read N- to C-terminus: Glutamate decarboxylase beta (466 aa).

Substrate contacts are provided by T62 and N83. Pyridoxal 5'-phosphate-binding positions include 126-127, T212, and H275; that span reads SS. K276 carries the post-translational modification N6-(pyridoxal phosphate)lysine. N6-acetyllysine is present on residues K446, K453, and K464.

The protein belongs to the group II decarboxylase family. As to quaternary structure, homohexamer composed of three dimers. Pyridoxal 5'-phosphate serves as cofactor.

The catalysed reaction is L-glutamate + H(+) = 4-aminobutanoate + CO2. In terms of biological role, converts glutamate to gamma-aminobutyrate (GABA), consuming one intracellular proton in the reaction. The gad system helps to maintain a near-neutral intracellular pH when cells are exposed to extremely acidic conditions. The ability to survive transit through the acidic conditions of the stomach is essential for successful colonization of the mammalian host by commensal and pathogenic bacteria. In Shigella flexneri, this protein is Glutamate decarboxylase beta (gadB).